A 545-amino-acid chain; its full sequence is Chaperonin GroEL (545 aa).

Residues 30–33 (TLGP), lysine 51, 87–91 (DGTTT), glycine 415, 479–481 (NAA), and aspartate 495 each bind ATP. Residues 526–545 (KDDAPAPAMPDMGGMGGMGM) form a disordered region.

The protein belongs to the chaperonin (HSP60) family. In terms of assembly, forms a cylinder of 14 subunits composed of two heptameric rings stacked back-to-back. Interacts with the co-chaperonin GroES.

The protein localises to the cytoplasm. The enzyme catalyses ATP + H2O + a folded polypeptide = ADP + phosphate + an unfolded polypeptide.. Together with its co-chaperonin GroES, plays an essential role in assisting protein folding. The GroEL-GroES system forms a nano-cage that allows encapsulation of the non-native substrate proteins and provides a physical environment optimized to promote and accelerate protein folding. The protein is Chaperonin GroEL of Paracidovorax citrulli (strain AAC00-1) (Acidovorax citrulli).